Here is a 177-residue protein sequence, read N- to C-terminus: Large ribosomal subunit protein uL5 (177 aa).

It belongs to the universal ribosomal protein uL5 family. As to quaternary structure, part of the 50S ribosomal subunit; part of the 5S rRNA/L5/L18/L25 subcomplex. Contacts the 5S rRNA and the P site tRNA. Forms a bridge to the 30S subunit in the 70S ribosome.

Its function is as follows. This is one of the proteins that bind and probably mediate the attachment of the 5S RNA into the large ribosomal subunit, where it forms part of the central protuberance. In the 70S ribosome it contacts protein S13 of the 30S subunit (bridge B1b), connecting the 2 subunits; this bridge is implicated in subunit movement. Contacts the P site tRNA; the 5S rRNA and some of its associated proteins might help stabilize positioning of ribosome-bound tRNAs. The chain is Large ribosomal subunit protein uL5 from Anaplasma phagocytophilum (strain HZ).